Reading from the N-terminus, the 321-residue chain is PIH1 domain-containing protein 2 (321 aa).

It belongs to the PIH1 family.

The protein is PIH1 domain-containing protein 2 (pih1d2) of Xenopus tropicalis (Western clawed frog).